The sequence spans 179 residues: Large ribosomal subunit protein uL5 (179 aa).

It belongs to the universal ribosomal protein uL5 family. As to quaternary structure, part of the 50S ribosomal subunit; part of the 5S rRNA/L5/L18/L25 subcomplex. Contacts the 5S rRNA and the P site tRNA. Forms a bridge to the 30S subunit in the 70S ribosome.

In terms of biological role, this is one of the proteins that bind and probably mediate the attachment of the 5S RNA into the large ribosomal subunit, where it forms part of the central protuberance. In the 70S ribosome it contacts protein S13 of the 30S subunit (bridge B1b), connecting the 2 subunits; this bridge is implicated in subunit movement. Contacts the P site tRNA; the 5S rRNA and some of its associated proteins might help stabilize positioning of ribosome-bound tRNAs. The sequence is that of Large ribosomal subunit protein uL5 from Exiguobacterium sp. (strain ATCC BAA-1283 / AT1b).